Here is a 425-residue protein sequence, read N- to C-terminus: Synaptotagmin-4 (425 aa).

Residues M1–T16 lie on the Vesicular side of the membrane. A helical transmembrane segment spans residues V17 to C37. The Cytoplasmic segment spans residues C38–G425. The interval T127–S147 is disordered. Residue S135 is modified to Phosphoserine; by MAPK8. Positions E137–T146 are enriched in low complexity. 2 C2 domains span residues K153–T274 and G287–H420. 3 residues coordinate Ca(2+): D246, S249, and D252.

This sequence belongs to the synaptotagmin family. As to quaternary structure, interacts with KIF1A; the interaction increases in presence of calcium and decreases when SYT4 is phosphorylated at Ser-135. Ca(2+) serves as cofactor. In terms of processing, phosphorylation at Ser-135 by MAPK8/JNK1 reduces interaction with KIF1A and neuronal dense core vesicles mobility. Expressed in many regions of the nervous system but is undetectable in extra neural tissues.

It is found in the cytoplasmic vesicle. The protein resides in the secretory vesicle. The protein localises to the neuronal dense core vesicle membrane. Its function is as follows. Synaptotagmin family member which does not bind Ca(2+). Plays a role in dendrite formation by melanocytes. In terms of biological role, synaptotagmin family member which does not bind Ca(2+). Involved in neuronal dense core vesicles (DCVs) mobility through its interaction with KIF1A. Upon increased neuronal activity, phosphorylation by MAPK8/JNK1 destabilizes the interaction with KIF1A and captures DCVs to synapses. Plays a role in dendrite formation by melanocytes. The sequence is that of Synaptotagmin-4 (Syt4) from Mus musculus (Mouse).